Here is a 192-residue protein sequence, read N- to C-terminus: BREX protein BrxB (192 aa).

This sequence belongs to the BrxB family.

Functionally, BREX systems (bacteriophage exclusion) provide immunity against bacteriophage. Part of a type 1 BREX system. This system allows phage adsorption but prevents phage DNA replication, without degradation of the phage DNA. Methylation of bacterial DNA by PglX probably guides self/non-self discrimination. When the brxA-brxB-brxC-pglX and pglZ-brxL operons are transformed into a susceptible B.subtilis strain (BEST7003) they confer resistance to bacteriophages SPbeta, SP16, Zeta, phi3T and SP02 and partial protection to phages SP01 and SP82G (these include lytic and temperate phage). They do not protect against phages phi105, rho10 or rho14. Additionally confers a very slight reduction in efficiency of plasmid transformation. This chain is BREX protein BrxB, found in Bacillus cereus (strain H3081.97).